The chain runs to 679 residues: Glycine--tRNA ligase beta subunit (679 aa).

Belongs to the class-II aminoacyl-tRNA synthetase family. Tetramer of two alpha and two beta subunits.

It localises to the cytoplasm. It catalyses the reaction tRNA(Gly) + glycine + ATP = glycyl-tRNA(Gly) + AMP + diphosphate. This Streptococcus agalactiae serotype III (strain NEM316) protein is Glycine--tRNA ligase beta subunit.